The following is a 256-amino-acid chain: Small ribosomal subunit protein uS2 (256 aa).

Positions 229–256 (PVDDNGDYGDFDEAIDEYADETDASESE) are disordered. Over residues 232-256 (DNGDYGDFDEAIDEYADETDASESE) the composition is skewed to acidic residues.

Belongs to the universal ribosomal protein uS2 family.

This is Small ribosomal subunit protein uS2 from Picosynechococcus sp. (strain ATCC 27264 / PCC 7002 / PR-6) (Agmenellum quadruplicatum).